The sequence spans 104 residues: Turripeptide OL55-like (104 aa).

Contains 8 disulfide bonds. As to expression, expressed by the venom duct.

It localises to the secreted. Its function is as follows. Acts as a neurotoxin by inhibiting an ion channel. This chain is Turripeptide OL55-like, found in Iotyrris cingulifera (Sea snail).